A 1585-amino-acid chain; its full sequence is Adhesion G protein-coupled receptor B2 (1585 aa).

The N-terminal stretch at 1–32 is a signal peptide; sequence MENTGWMGKGHRMTPACPLLLSVILSLRLATA. The Extracellular portion of the chain corresponds to 33 to 936; that stretch reads FDPAPSACSA…ELAGSPSVPL (904 aa). Residues Asn106, Asn191, and Asn192 are each glycosylated (N-linked (GlcNAc...) asparagine). Low complexity predominate over residues 229-238; the sequence is AGAGSTTTTS. The disordered stretch occupies residues 229-271; it reads AGAGSTTTTSPGPPAAHTLSNALVPGGPAPPAEADLHSGSSND. O-linked (Xyl...) (chondroitin sulfate) serine glycosylation is present at Ser266. 4 consecutive TSP type-1 domains span residues 309-362, 364-417, 419-472, and 475-528; these read DPAA…ATCP, HGVW…AACP, EGQW…LECP, and DSKW…KRCP. 14 cysteine pairs are disulfide-bonded: Cys321–Cys355, Cys325–Cys361, Cys336–Cys345, Cys376–Cys411, Cys380–Cys416, Cys391–Cys401, Cys431–Cys466, Cys435–Cys471, Cys446–Cys456, Cys487–Cys522, Cys491–Cys527, Cys502–Cys512, Cys534–Cys569, and Cys557–Cys587. An N-linked (GlcNAc...) asparagine glycan is attached at Asn356. The N-linked (GlcNAc...) asparagine glycan is linked to Asn437. Residues Asn560 and Asn645 are each glycosylated (N-linked (GlcNAc...) asparagine). The 168-residue stretch at 757-924 folds into the GAIN-B domain; sequence DRLFLPKEVL…AVLAQPPKDL (168 aa). The interval 767–806 is disordered; the sequence is SLSSPGKPATSGAAGSPGRGRGPGTVPPGPGHSHQRLLPA. Low complexity predominate over residues 769–780; it reads SSPGKPATSGAA. Asn867 is a glycosylation site (N-linked (GlcNAc...) asparagine). 2 cysteine pairs are disulfide-bonded: Cys874/Cys906 and Cys894/Cys908. Positions 874–924 are GPS; it reads CASWDYSRADASSGDWDTENCQTLETQAAHTRCQCQHLSTFAVLAQPPKDL. The chain crosses the membrane as a helical span at residues 937–957; the sequence is VIGCAVSCMALLTLLAIYAAF. Over 958-965 the chain is Cytoplasmic; that stretch reads WRFIKSER. Residues 966–986 traverse the membrane as a helical segment; that stretch reads SIILLNFCLSILASNILILVG. Over 987-994 the chain is Extracellular; sequence QSRVLSKG. A helical membrane pass occupies residues 995 to 1015; the sequence is VCTMTAAFLHFFFLSSFCWVL. Over 1016–1036 the chain is Cytoplasmic; sequence TEAWQSYLAVIGRMRTRLVRK. The chain crosses the membrane as a helical span at residues 1037–1057; sequence RFLCLGWGLPALVVAVSVGFT. Residues 1058–1078 are Extracellular-facing; that stretch reads RTKGYGTSSYCWLSLEGGLLY. A helical membrane pass occupies residues 1079-1099; sequence AFVGPAAVIVLVNMLIGIIVF. Over 1100-1121 the chain is Cytoplasmic; that stretch reads NKLMARDGISDKSKKQRAGSER. Residues 1122–1142 form a helical membrane-spanning segment; that stretch reads CPWASLLLPCSACGAVPSPLL. Residues 1143–1153 lie on the Extracellular side of the membrane; that stretch reads SSASARNAMAS. Residues 1154–1174 traverse the membrane as a helical segment; sequence LWSSCVVLPLLALTWMSAVLA. Residues 1175 to 1585 lie on the Cytoplasmic side of the membrane; the sequence is MTDRRSVLFQ…PPDGDFQTEV (411 aa). A Phosphotyrosine modification is found at Tyr1351. 3 disordered regions span residues 1359 to 1385, 1423 to 1454, and 1498 to 1585; these read LSLQ…PRRA, FQPP…GSTM, and YRSQ…QTEV. Basic and acidic residues predominate over residues 1372 to 1382; that stretch reads DAPRARPEGTP. The segment covering 1543–1552 has biased composition (polar residues); sequence SWSTFKSMTL. Over residues 1575-1585 the composition is skewed to acidic residues; sequence EPPDGDFQTEV.

Belongs to the G-protein coupled receptor 2 family. Adhesion G-protein coupled receptor (ADGR) subfamily. In terms of assembly, heterodimer of 2 chains generated by proteolytic processing; the large extracellular N-terminal fragment and the membrane-bound C-terminal fragment predominantly remain associated and non-covalently linked. Interacts with GABPB2. Interacts (via carboxy-terminus) with TAX1BP3. Interacts with GNAZ. Interacts with SH3GL2. Glycosylated. Post-translationally, autoproteolytically processed at the GPS region of the GAIN-B domain; this cleavage modulates receptor activity. Additionally, furin is involved in the cleavage at another site, in the middle of the extracellular domain, generating a soluble fragment. In terms of tissue distribution, detected in cerebrospinal fluid (at protein level). Strongly expressed in brain. Also detected in heart, thymus, skeletal muscle, and different cell lines.

Its subcellular location is the cell membrane. It is found in the secreted. With respect to regulation, receptor activity is regulated by proteolytic processing. The long N-terminal has a an inhibitory effect on the constitutive signaling activity. Removal of the N-terminal region induces an increase of the receptor activity. In terms of biological role, orphan G-protein coupled receptor involved in cell adhesion and probably in cell-cell interactions. Activates NFAT-signaling pathway, a transcription factor, via the G-protein GNAZ. Involved in angiogenesis inhibition. The protein is Adhesion G protein-coupled receptor B2 of Homo sapiens (Human).